We begin with the raw amino-acid sequence, 231 residues long: Large ribosomal subunit protein uL1 (231 aa).

Belongs to the universal ribosomal protein uL1 family. As to quaternary structure, part of the 50S ribosomal subunit.

Functionally, binds directly to 23S rRNA. The L1 stalk is quite mobile in the ribosome, and is involved in E site tRNA release. Protein L1 is also a translational repressor protein, it controls the translation of the L11 operon by binding to its mRNA. This chain is Large ribosomal subunit protein uL1, found in Pseudomonas fluorescens (strain ATCC BAA-477 / NRRL B-23932 / Pf-5).